Consider the following 147-residue polypeptide: Hemoglobin subunit beta-3 (147 aa).

One can recognise a Globin domain in the interval 2–147; it reads EWTDAERTAI…VTSALSRQYH (146 aa). 2 residues coordinate heme b: His-63 and His-92.

Belongs to the globin family. As to quaternary structure, heterotetramer of two alpha chains and two beta chains. Red blood cells.

Its function is as follows. Involved in oxygen transport from gills to the various peripheral tissues. The sequence is that of Hemoglobin subunit beta-3 (hbb3) from Muraena helena (Mediterranean moray).